Reading from the N-terminus, the 118-residue chain is Large ribosomal subunit protein bL20 (118 aa).

This sequence belongs to the bacterial ribosomal protein bL20 family.

Its function is as follows. Binds directly to 23S ribosomal RNA and is necessary for the in vitro assembly process of the 50S ribosomal subunit. It is not involved in the protein synthesizing functions of that subunit. The polypeptide is Large ribosomal subunit protein bL20 (Cyanothece sp. (strain PCC 7425 / ATCC 29141)).